Here is a 489-residue protein sequence, read N- to C-terminus: tRNA(Ile)-lysidine synthase (489 aa).

35-40 provides a ligand contact to ATP; sequence SGGLDS.

This sequence belongs to the tRNA(Ile)-lysidine synthase family.

The protein localises to the cytoplasm. The catalysed reaction is cytidine(34) in tRNA(Ile2) + L-lysine + ATP = lysidine(34) in tRNA(Ile2) + AMP + diphosphate + H(+). Functionally, ligates lysine onto the cytidine present at position 34 of the AUA codon-specific tRNA(Ile) that contains the anticodon CAU, in an ATP-dependent manner. Cytidine is converted to lysidine, thus changing the amino acid specificity of the tRNA from methionine to isoleucine. The chain is tRNA(Ile)-lysidine synthase from Burkholderia pseudomallei (strain K96243).